The chain runs to 167 residues: Photosystem I assembly protein Ycf3 (167 aa).

TPR repeat units follow at residues 35 to 68 (AFTYYREGMSAQSEGEYAEALQNYYEAMRLEVDA), 72 to 105 (SYIFYNIGLIHTSNGEHARALEYYYQALERNPSL), and 120 to 153 (GEQAIENGQAEISKMLFDKAADYWKEAIRLAPTN).

The protein belongs to the Ycf3 family.

The protein resides in the plastid. It is found in the chloroplast thylakoid membrane. Its function is as follows. Essential for the assembly of the photosystem I (PSI) complex. May act as a chaperone-like factor to guide the assembly of the PSI subunits. The sequence is that of Photosystem I assembly protein Ycf3 from Pleurastrum terricola (Filamentous green alga).